The primary structure comprises 591 residues: Cytidine monophosphate-N-acetylneuraminic acid hydroxylase (591 aa).

The Rieske domain occupies 16-114; sequence LASAEVESLK…IENDDENGVS (99 aa). [2Fe-2S] cluster-binding residues include Cys56, His58, Cys77, and His80.

The protein belongs to the CMP-Neu5Ac hydroxylase family. [2Fe-2S] cluster is required as a cofactor.

The protein localises to the cytoplasm. The catalysed reaction is CMP-N-acetyl-beta-neuraminate + 2 Fe(II)-[cytochrome b5] + O2 + 2 H(+) = CMP-N-glycoloyl-beta-neuraminate + 2 Fe(III)-[cytochrome b5] + H2O. Its pathway is amino-sugar metabolism; N-acetylneuraminate metabolism. Its function is as follows. Sialic acids are components of carbohydrate chains of glycoconjugates and are involved in cell-cell recognition and cell-pathogen interactions. Catalyzes the conversion of CMP-N-acetylneuraminic acid (CMP-Neu5Ac) into its hydroxylated derivative CMP-N-glycolylneuraminic acid (CMP-Neu5Gc), a sialic acid abundantly expressed at the surface of many cells. This Xenopus laevis (African clawed frog) protein is Cytidine monophosphate-N-acetylneuraminic acid hydroxylase (cmah).